A 273-amino-acid chain; its full sequence is DNA repair protein RecO (273 aa).

It belongs to the RecO family.

Functionally, involved in DNA repair and RecF pathway recombination. The polypeptide is DNA repair protein RecO (Saccharopolyspora erythraea (strain ATCC 11635 / DSM 40517 / JCM 4748 / NBRC 13426 / NCIMB 8594 / NRRL 2338)).